Reading from the N-terminus, the 101-residue chain is NADH-quinone oxidoreductase subunit K (101 aa).

Transmembrane regions (helical) follow at residues 5–25, 30–50, and 61–81; these read LTHYVVASGILFAIGLAGIIL, IVILMCLEIMLNAANLALVAF, and VLVFFVITVAAAEVAVGLALI.

Belongs to the complex I subunit 4L family. NDH-1 is composed of 14 different subunits. Subunits NuoA, H, J, K, L, M, N constitute the membrane sector of the complex.

The protein resides in the cell inner membrane. It catalyses the reaction a quinone + NADH + 5 H(+)(in) = a quinol + NAD(+) + 4 H(+)(out). Its function is as follows. NDH-1 shuttles electrons from NADH, via FMN and iron-sulfur (Fe-S) centers, to quinones in the respiratory chain. The immediate electron acceptor for the enzyme in this species is believed to be ubiquinone. Couples the redox reaction to proton translocation (for every two electrons transferred, four hydrogen ions are translocated across the cytoplasmic membrane), and thus conserves the redox energy in a proton gradient. This Methylacidiphilum infernorum (isolate V4) (Methylokorus infernorum (strain V4)) protein is NADH-quinone oxidoreductase subunit K.